Consider the following 179-residue polypeptide: Large ribosomal subunit protein uL6 (179 aa).

It belongs to the universal ribosomal protein uL6 family. As to quaternary structure, part of the 50S ribosomal subunit.

This protein binds to the 23S rRNA, and is important in its secondary structure. It is located near the subunit interface in the base of the L7/L12 stalk, and near the tRNA binding site of the peptidyltransferase center. The protein is Large ribosomal subunit protein uL6 of Mycoplasmopsis pulmonis (strain UAB CTIP) (Mycoplasma pulmonis).